A 286-amino-acid polypeptide reads, in one-letter code: NAD(P)H azoreductase (286 aa).

Residues 6–11 (GGTGTI), R31, and 136–141 (GFFMQN) contribute to the NADP(+) site.

It belongs to the NmrA-type oxidoreductase family. Azoreductase type 3 subfamily. Monomer.

In terms of biological role, catalyzes the reductive cleavage of azo bond in aromatic azo compounds to the corresponding amines. Uses preferentially NADPH rather than NADH as an electron donor for its activity. The enzyme reductively cleaved Orange II and carboxy-Orange II, and can also reduce several sulfonated structural analogs, which carry a hydroxy group in the 2 position of the naphthol ring. In Xenophilus azovorans, this protein is NAD(P)H azoreductase (azoB).